Reading from the N-terminus, the 146-residue chain is Large ribosomal subunit protein uL15 (146 aa).

The interval 1-56 (MKLHELRAAEGANKASKRVGRGTGSGLGKTSGRGQNGQNSRSGGGVRPGFEGGQMP) is disordered. 2 stretches are compositionally biased toward gly residues: residues 21 to 35 (RGTGSGLGKTSGRGQ) and 42 to 52 (SGGGVRPGFEG).

It belongs to the universal ribosomal protein uL15 family. As to quaternary structure, part of the 50S ribosomal subunit.

Binds to the 23S rRNA. In Clostridium botulinum (strain Okra / Type B1), this protein is Large ribosomal subunit protein uL15.